A 462-amino-acid polypeptide reads, in one-letter code: Argininosuccinate lyase (462 aa).

The protein belongs to the lyase 1 family. Argininosuccinate lyase subfamily.

It is found in the cytoplasm. The enzyme catalyses 2-(N(omega)-L-arginino)succinate = fumarate + L-arginine. It functions in the pathway amino-acid biosynthesis; L-arginine biosynthesis; L-arginine from L-ornithine and carbamoyl phosphate: step 3/3. This chain is Argininosuccinate lyase, found in Caldicellulosiruptor saccharolyticus (strain ATCC 43494 / DSM 8903 / Tp8T 6331).